We begin with the raw amino-acid sequence, 185 residues long: Elongation factor P (185 aa).

This sequence belongs to the elongation factor P family.

It localises to the cytoplasm. The protein operates within protein biosynthesis; polypeptide chain elongation. Involved in peptide bond synthesis. Stimulates efficient translation and peptide-bond synthesis on native or reconstituted 70S ribosomes in vitro. Probably functions indirectly by altering the affinity of the ribosome for aminoacyl-tRNA, thus increasing their reactivity as acceptors for peptidyl transferase. The polypeptide is Elongation factor P (Staphylococcus aureus (strain Mu3 / ATCC 700698)).